The following is a 338-amino-acid chain: Lipoate-protein ligase A (338 aa).

The BPL/LPL catalytic domain occupies 29–216; it reads PATQRVLFLW…AFFAHYGERV (188 aa). ATP is bound by residues Arg71, 76–79, and Lys134; that span reads GAVF. Lys134 contacts (R)-lipoate.

This sequence belongs to the LplA family. In terms of assembly, monomer.

The protein resides in the cytoplasm. It catalyses the reaction L-lysyl-[lipoyl-carrier protein] + (R)-lipoate + ATP = N(6)-[(R)-lipoyl]-L-lysyl-[lipoyl-carrier protein] + AMP + diphosphate + H(+). Its pathway is protein modification; protein lipoylation via exogenous pathway; protein N(6)-(lipoyl)lysine from lipoate: step 1/2. It functions in the pathway protein modification; protein lipoylation via exogenous pathway; protein N(6)-(lipoyl)lysine from lipoate: step 2/2. Functionally, catalyzes both the ATP-dependent activation of exogenously supplied lipoate to lipoyl-AMP and the transfer of the activated lipoyl onto the lipoyl domains of lipoate-dependent enzymes. This Escherichia fergusonii (strain ATCC 35469 / DSM 13698 / CCUG 18766 / IAM 14443 / JCM 21226 / LMG 7866 / NBRC 102419 / NCTC 12128 / CDC 0568-73) protein is Lipoate-protein ligase A.